Here is a 300-residue protein sequence, read N- to C-terminus: Integrin-binding sialoprotein (300 aa).

The interval 41-258 (RFPVQSSSDS…YEQTGAHEYD (218 aa)) is disordered. A phosphoserine mark is found at Ser-46, Ser-51, Ser-59, Ser-60, Ser-82, and Ser-90. Over residues 46–58 (SSSDSSEENGNGD) the composition is skewed to low complexity. A compositionally biased stretch (acidic residues) spans 59–92 (SSEEEEEEEENSNEEENNEENEDSDGNEDEDSEA). The segment covering 93–102 (ENITLSTTTL) has biased composition (polar residues). A glycan (N-linked (GlcNAc...) asparagine) is linked at Asn-94. Over residues 125–136 (KAGDIGKKSAKE) the composition is skewed to basic and acidic residues. Residues 137 to 160 (EESDEDEEEEEENEENEAEVDDNE) are compositionally biased toward acidic residues. Residue Ser-139 is modified to Phosphoserine. 3 stretches are compositionally biased toward polar residues: residues 161–173 (QGTNGTSTNSTEV), 193–202 (VTEAQGTTVA), and 229–243 (ISGTTLPPSGKTTTP). Asn-164 and Asn-169 each carry an N-linked (GlcNAc...) asparagine glycan. Ser-266 is subject to Phosphoserine. The Integrin-binding motif motif lies at 272–274 (RGD). Residue Ser-293 is modified to Phosphoserine. Tyr-299 and Tyr-300 each carry sulfotyrosine.

As to quaternary structure, monomer. Interacts with integrins; the interaction promotes cell adhesion.

Its subcellular location is the secreted. Functionally, binds tightly to hydroxyapatite. Appears to form an integral part of the mineralized matrix. Probably important to cell-matrix interaction. Promotes adhesion and migration of various cells via the alpha-V/beta-3 integrin receptor (ITGAV:ITGB3). This chain is Integrin-binding sialoprotein (IBSP), found in Sus scrofa (Pig).